Here is an 867-residue protein sequence, read N- to C-terminus: Protein translocase subunit SecA (867 aa).

ATP-binding positions include Gln86, 104–108 (GEGKT), and Asp499. 4 residues coordinate Zn(2+): Cys848, Cys850, Cys859, and His860.

This sequence belongs to the SecA family. As to quaternary structure, monomer and homodimer. Part of the essential Sec protein translocation apparatus which comprises SecA, SecYEG and auxiliary proteins SecDF-YajC and YidC. Zn(2+) serves as cofactor.

Its subcellular location is the cell membrane. It is found in the cytoplasm. It catalyses the reaction ATP + H2O + cellular proteinSide 1 = ADP + phosphate + cellular proteinSide 2.. Its function is as follows. Part of the Sec protein translocase complex. Interacts with the SecYEG preprotein conducting channel. Has a central role in coupling the hydrolysis of ATP to the transfer of proteins into and across the cell membrane, serving both as a receptor for the preprotein-SecB complex and as an ATP-driven molecular motor driving the stepwise translocation of polypeptide chains across the membrane. The sequence is that of Protein translocase subunit SecA from Wolbachia sp. subsp. Brugia malayi (strain TRS).